A 963-amino-acid chain; its full sequence is Iron-responsive element-binding protein 2 (963 aa).

The [4Fe-4S] cluster site is built by cysteine 512, cysteine 578, and cysteine 581.

The protein belongs to the aconitase/IPM isomerase family. As to quaternary structure, interacts with RBCK1 isoform 1 and isoform 2 only in iron-rich conditions. Interacts (when associated with the 4Fe-4S) with FBXL5. Interacts with CIAO1 and CIAO2A. [4Fe-4S] cluster is required as a cofactor. In terms of processing, ubiquitinated and degraded by the proteasome in presence of high level of iron and oxygen. Ubiquitinated by a SCF complex containing FBXL5. Upon iron and oxygen depletion FBXL5 is degraded, preventing ubiquitination and allowing its RNA-binding activity.

The protein localises to the cytoplasm. Its function is as follows. RNA-binding protein that binds to iron-responsive elements (IRES), which are stem-loop structures found in the 5'-UTR of ferritin, and delta aminolevulinic acid synthase mRNAs, and in the 3'-UTR of transferrin receptor mRNA. Binding to the IRE element in ferritin results in the repression of its mRNA translation. Binding of the protein to the transferrin receptor mRNA inhibits the degradation of this otherwise rapidly degraded mRNA. The protein is Iron-responsive element-binding protein 2 (IREB2) of Homo sapiens (Human).